Consider the following 614-residue polypeptide: Probable peptide-binding protein YejA (614 aa).

Residues 1-27 (MILAPLKSRILIALAASALLIPAVASA) form the signal peptide.

It belongs to the bacterial solute-binding protein 5 family. The complex is composed of one ATP-binding protein (YejF), two transmembrane proteins (YejB and YejE) and a solute-binding protein (YejA).

It localises to the periplasm. Functionally, probably part of the ABC transporter complex YejABEF, which is likely involved in broad-spectrum peptide import. The sequence is that of Probable peptide-binding protein YejA from Agrobacterium fabrum (strain C58 / ATCC 33970) (Agrobacterium tumefaciens (strain C58)).